Reading from the N-terminus, the 258-residue chain is Ribosomal RNA small subunit methyltransferase J (258 aa).

S-adenosyl-L-methionine is bound by residues 123 to 124 (ER) and aspartate 177. The tract at residues 232 to 258 (IDGPKPSHSLEGKSSRYDIYPKKALKA) is disordered. The segment covering 239 to 252 (HSLEGKSSRYDIYP) has biased composition (basic and acidic residues).

This sequence belongs to the methyltransferase superfamily. RsmJ family.

It localises to the cytoplasm. The catalysed reaction is guanosine(1516) in 16S rRNA + S-adenosyl-L-methionine = N(2)-methylguanosine(1516) in 16S rRNA + S-adenosyl-L-homocysteine + H(+). Specifically methylates the guanosine in position 1516 of 16S rRNA. This Pseudomonas putida (strain GB-1) protein is Ribosomal RNA small subunit methyltransferase J.